We begin with the raw amino-acid sequence, 110 residues long: uncharacterized protein (110 aa).

2 disordered regions span residues 1 to 41 (MEWG…ERAQ) and 65 to 110 (LRQL…ASES). Residues 38-68 (ERAQQLLDAVEQRQRQLLDTIAACEEMLRQL) adopt a coiled-coil conformation.

This is an uncharacterized protein from Mus musculus (Mouse).